The sequence spans 1185 residues: DNA-directed RNA polymerase subunit beta' (1185 aa).

Zn(2+) contacts are provided by Cys67, Cys69, Cys82, and Cys85. 3 residues coordinate Mg(2+): Asp457, Asp459, and Asp461. Zn(2+) is bound by residues Cys802, Cys876, Cys883, and Cys886.

The protein belongs to the RNA polymerase beta' chain family. The RNAP catalytic core consists of 2 alpha, 1 beta, 1 beta' and 1 omega subunit. When a sigma factor is associated with the core the holoenzyme is formed, which can initiate transcription. Mg(2+) is required as a cofactor. Zn(2+) serves as cofactor.

It carries out the reaction RNA(n) + a ribonucleoside 5'-triphosphate = RNA(n+1) + diphosphate. DNA-dependent RNA polymerase catalyzes the transcription of DNA into RNA using the four ribonucleoside triphosphates as substrates. This Clostridium novyi (strain NT) protein is DNA-directed RNA polymerase subunit beta'.